Here is a 276-residue protein sequence, read N- to C-terminus: Hydroxyethylthiazole kinase (276 aa).

Substrate-binding residues include Met53 and Ala202.

This sequence belongs to the Thz kinase family. Mg(2+) is required as a cofactor.

The catalysed reaction is 5-(2-hydroxyethyl)-4-methylthiazole + ATP = 4-methyl-5-(2-phosphooxyethyl)-thiazole + ADP + H(+). Its pathway is cofactor biosynthesis; thiamine diphosphate biosynthesis; 4-methyl-5-(2-phosphoethyl)-thiazole from 5-(2-hydroxyethyl)-4-methylthiazole: step 1/1. Its function is as follows. Thiazole kinase involved in thiamine salvage pathway. The chain is Hydroxyethylthiazole kinase (THIM) from Arabidopsis thaliana (Mouse-ear cress).